Consider the following 315-residue polypeptide: Olfactory receptor 3A1 (315 aa).

The Extracellular portion of the chain corresponds to 1–28 (MQPESGANGTVIAEFILLGLLEAPGLQP). N-linked (GlcNAc...) asparagine glycosylation occurs at N8. The helical transmembrane segment at 29 to 52 (VVFVLFLFAYLVTVGGNLSILAAV) threads the bilayer. Residues 53–60 (LVEPKLHS) lie on the Cytoplasmic side of the membrane. The chain crosses the membrane as a helical span at residues 61-82 (PMYFFLGNLSVLDVGCISVTVP). Residues 83–103 (SMLSRLLSRKRAVPCGACLTQ) lie on the Extracellular side of the membrane. C100 and C192 are disulfide-bonded. Residues 104–123 (LFFFHLFVGVDCFLLTAMAY) form a helical membrane-spanning segment. Residues 124 to 143 (DRFLAICRPLTYSTRMSQTV) are Cytoplasmic-facing. A helical membrane pass occupies residues 144-161 (QRMLVAASWACAFTNALT). Residues 162-199 (HTVAMSTLNFCGPNEVNHFYCDLPQLFQLSCSSTQLNE) lie on the Extracellular side of the membrane. The helical transmembrane segment at 200–223 (LLLFAVGFIMAGTPMALIVISYIH) threads the bilayer. Residues 224 to 240 (VAAAVLRIRSVEGRKKA) lie on the Cytoplasmic side of the membrane. A helical transmembrane segment spans residues 241–264 (FSTCGSHLTVVAMFYGSGIFNYMR). Topologically, residues 265–275 (LGSTKLSDKDK) are extracellular. A helical membrane pass occupies residues 276-295 (AVGIFNTVINPMVNPIIYRF). Topologically, residues 296–315 (RNPEVQSAIWRMLTGRRSLA) are cytoplasmic.

It belongs to the G-protein coupled receptor 1 family.

It is found in the cell membrane. Its function is as follows. Odorant receptor. The sequence is that of Olfactory receptor 3A1 (OR3A1) from Pan troglodytes (Chimpanzee).